A 644-amino-acid polypeptide reads, in one-letter code: Protein FAM149B1 (644 aa).

3 disordered regions span residues 392–490 (NQSD…NTLL), 551–575 (TFRS…RPGR), and 609–644 (GHFP…RPGL). Positions 395–404 (DCRDSEDKVS) are enriched in basic and acidic residues. A compositionally biased stretch (polar residues) spans 449–459 (PITSSVTQPIT). Positions 626-644 (QARSHNRGGSTARSSRPGL) are enriched in polar residues.

It belongs to the FAM149 family.

This chain is Protein FAM149B1 (fam149b1), found in Danio rerio (Zebrafish).